The primary structure comprises 366 residues: S-adenosylmethionine decarboxylase proenzyme 1 (366 aa).

Active-site residues include glutamate 9 and glutamate 12. A substrate-binding site is contributed by glutamate 68. The active-site Schiff-base intermediate with substrate; via pyruvic acid is the serine 69. Serine 69 carries the post-translational modification Pyruvic acid (Ser); by autocatalysis. The active-site Proton donor; for catalytic activity is the cysteine 83. Residues serine 233 and histidine 246 each act as proton acceptor; for processing activity in the active site. Glutamate 250 provides a ligand contact to substrate.

Belongs to the eukaryotic AdoMetDC family. Requires pyruvate as cofactor. Is synthesized initially as an inactive proenzyme. Formation of the active enzyme involves a self-maturation process in which the active site pyruvoyl group is generated from an internal serine residue via an autocatalytic post-translational modification. Two non-identical subunits are generated from the proenzyme in this reaction, and the pyruvate is formed at the N-terminus of the alpha chain, which is derived from the carboxyl end of the proenzyme. The post-translation cleavage follows an unusual pathway, termed non-hydrolytic serinolysis, in which the side chain hydroxyl group of the serine supplies its oxygen atom to form the C-terminus of the beta chain, while the remainder of the serine residue undergoes an oxidative deamination to produce ammonia and the pyruvoyl group blocking the N-terminus of the alpha chain.

It carries out the reaction S-adenosyl-L-methionine + H(+) = S-adenosyl 3-(methylsulfanyl)propylamine + CO2. It functions in the pathway amine and polyamine biosynthesis; S-adenosylmethioninamine biosynthesis; S-adenosylmethioninamine from S-adenosyl-L-methionine: step 1/1. In terms of biological role, essential for biosynthesis of the polyamines spermidine and spermine. Essential for polyamine homeostasis, and normal plant embryogenesis, growth and development. The chain is S-adenosylmethionine decarboxylase proenzyme 1 from Arabidopsis thaliana (Mouse-ear cress).